Consider the following 145-residue polypeptide: Cystatin-like 1 (145 aa).

An N-terminal signal peptide occupies residues 1-19 (MGIGCWRNPLLLLIALVLS). Residues 37–115 (SKKNMNSTLN…KKLRKSLICE (79 aa)) enclose the Cystatin domain. Asparagine 42 carries an N-linked (GlcNAc...) asparagine glycan. 2 disulfide bridges follow: cysteine 91/cysteine 101 and cysteine 114/cysteine 134.

It belongs to the cystatin family.

The protein resides in the secreted. This is Cystatin-like 1 (CSTL1) from Homo sapiens (Human).